Here is a 326-residue protein sequence, read N- to C-terminus: MVKPSKILEKIKKRTEPVAEPVVEEESDEEIIEQEGSEEEEEIVEEESEEEEEEVEEENKNIEENKKDQSIYTKKRVLFTSTRGIGSKYRHLMADLISLIPHSKKEDKIDDRKTLSLINETCEMKSCNYAILFDVRKGTDCFLWMAKTPLGPTVKFHITNVHTLDELQMTGNCLKGSRPFLHFDKSFDSEVHLQLIKELITQIYSTPKGHVKSKPFFDHVFSFFYQDGRIWFRNYQISDQEFKKDSLLTEIGPRMIMHIDKIFSDGFGGSVLYSNPNYVSPNNTRSDHKLSKANKYIKRKYQKGKAEERQKISFIEPSEVDTVFDN.

Positions 1–17 (MVKPSKILEKIKKRTEP) are enriched in basic and acidic residues. The segment at 1 to 66 (MVKPSKILEK…EENKNIEENK (66 aa)) is disordered. A compositionally biased stretch (acidic residues) spans 22–57 (VVEEESDEEIIEQEGSEEEEEIVEEESEEEEEEVEE). The Brix domain maps to 75–268 (KRVLFTSTRG…IDKIFSDGFG (194 aa)).

Belongs to the BRX1 family.

The protein resides in the nucleus. Its subcellular location is the nucleolus. Required for biogenesis of the 60S ribosomal subunit. In Dictyostelium discoideum (Social amoeba), this protein is Ribosome biogenesis protein BRX1 homolog (bxdc2).